Here is a 580-residue protein sequence, read N- to C-terminus: Alpha-glucosidase (580 aa).

An N-terminal signal peptide occupies residues 1-19 (MRPLGALSLFALLATTVSG). N-linked (GlcNAc...) asparagine glycosylation is found at asparagine 102 and asparagine 127. Aspartate 224 functions as the Nucleophile in the catalytic mechanism. Glutamate 290 functions as the Proton donor in the catalytic mechanism. Asparagine 501 is a glycosylation site (N-linked (GlcNAc...) asparagine). Residues 560-580 (AAAINLSIGLLLAIMARYIFV) traverse the membrane as a helical segment.

The protein belongs to the glycosyl hydrolase 13 family. In terms of assembly, (Microbial infection) Binds to L.sphaericus BinB subunit of the binary toxin BinAB. In 4th-instar larvae produced in the brush border membranes of the gastric caeca and the posterior stomach cells (at protein level).

It localises to the membrane. The enzyme catalyses Hydrolysis of terminal, non-reducing (1-&gt;4)-linked alpha-D-glucose residues with release of alpha-D-glucose.. Probably an alpha-glucosidase, it has no alpha-amylase function. Its function is as follows. (Microbial infection) Serves as the larval receptor for Lysinibacillus sphaericus BinB toxin. The protein is Alpha-glucosidase of Culex pipiens (House mosquito).